A 434-amino-acid chain; its full sequence is Probable phosphatidylinositol 3,4,5-trisphosphate 3-phosphatase TEP1 (434 aa).

The 223-residue stretch at 33 to 255 (KTKNDIGLRL…RYHEFFITHE (223 aa)) folds into the Phosphatase tensin-type domain. The active-site Phosphocysteine intermediate is Cys193.

It catalyses the reaction a 1,2-diacyl-sn-glycero-3-phospho-(1D-myo-inositol-3,4,5-trisphosphate) + H2O = a 1,2-diacyl-sn-glycero-3-phospho-(1D-myo-inositol-4,5-bisphosphate) + phosphate. In terms of biological role, may act as a phosphoinositide 3-phosphatase by regulating PtdIns(3,4,5)P3 levels. This is Probable phosphatidylinositol 3,4,5-trisphosphate 3-phosphatase TEP1 (TEP1) from Saccharomyces cerevisiae (strain ATCC 204508 / S288c) (Baker's yeast).